The chain runs to 83 residues: Mu-theraphotoxin-Hhn2j 1 (83 aa).

The N-terminal stretch at 1–21 (MKASMFLALAGLVLLFVVGYA) is a signal peptide. The propeptide occupies 22-48 (SESEEKEFPIELLSKIFAVDVFKGEER). Disulfide bonds link Cys50–Cys65, Cys57–Cys70, and Cys64–Cys77. Leu81 is subject to Leucine amide.

Belongs to the neurotoxin 10 (Hwtx-1) family. 15 (Hntx-3) subfamily. Monomer. As to expression, expressed by the venom gland.

Its subcellular location is the secreted. Lethal neurotoxin. Selectively blocks tetrodotoxin-sensitive voltage-gated sodium channels (Nav). Does not affect tetrodotoxin-resistant voltage-gated sodium channels or calcium channels. This Cyriopagopus hainanus (Chinese bird spider) protein is Mu-theraphotoxin-Hhn2j 1.